The primary structure comprises 130 residues: Protein LLP homolog (130 aa).

The span at 1 to 21 shows a compositional bias: basic residues; sequence MAKSLRSKWKRKMRAEKRKKN. 2 disordered regions span residues 1–23 and 57–76; these read MAKS…KNAP and QEKM…EKDD. Residues 10 to 78 adopt a coiled-coil conformation; the sequence is KRKMRAEKRK…GADEEKDDMK (69 aa). Lysine 78 participates in a covalent cross-link: Glycyl lysine isopeptide (Lys-Gly) (interchain with G-Cter in SUMO2). Over residues 104 to 124 the composition is skewed to basic residues; sequence RQRKRLKAKREKKRGKSRAKA. The interval 104-130 is disordered; it reads RQRKRLKAKREKKRGKSRAKAAKGLAW.

The protein belongs to the learning-associated protein family. In terms of assembly, interacts with CTCF, MYO1C and with the transcriptional machinery, including RNA polymerase II and TBP. Widely expressed, with high levels in testis and spleen and low levels in heart. In the brain, expressed in the cortex and hippocampus, and at very low levels in the cerebellum.

It localises to the nucleus. Its subcellular location is the nucleolus. It is found in the chromosome. Functionally, in hippocampal neurons, regulates dendritic and spine growth and synaptic transmission. This Mus musculus (Mouse) protein is Protein LLP homolog (Llph).